The following is an 800-amino-acid chain: Phosphoinositide 3-kinase adapter protein 1 (800 aa).

The 138-residue stretch at 8–145 folds into the TIR domain; that stretch reads GGYDVLILYA…AVKKAISEDS (138 aa). A necessary and sufficient to mediate inhibition of NF-kappa-B downstream of activated TLRs region spans residues 10–144; the sequence is YDVLILYASD…EAVKKAISED (135 aa). In terms of domain architecture, DBB spans 185–321; it reads VQPDHIRCGV…NIPASGLHLF (137 aa). Position 266 is a phosphotyrosine (tyrosine 266). 3 positions are modified to phosphotyrosine; by SYK: tyrosine 423, tyrosine 448, and tyrosine 463. The disordered stretch occupies residues 527–548; sequence EMASRPPVPVPRPESSSPQPDN. Positions 643 to 663 form a coiled coil; it reads QQENLKRLRDSITRRQMEKQK. Over residues 702 to 713 the composition is skewed to basic and acidic residues; that stretch reads PKKELKRGDWKT. Positions 702–800 are disordered; that stretch reads PKKELKRGDW…YPPPVPPRGR (99 aa). Low complexity predominate over residues 714–737; the sequence is ESTSSTTSSASNRSSTRSILSVSS. Residues 749–759 show a composition bias toward polar residues; sequence SEASRSRSPIP. 2 stretches are compositionally biased toward pro residues: residues 767 to 777 and 791 to 800; these read LPLPERPPRVP and YPPPVPPRGR.

As to quaternary structure, homooligomer. Interacts (phosphorylated on tyrosine residues within YXXM motifs) with PIK3R1 (via SH2 domain); required for BCR- and TLR-mediated activation of phosphoinositide 3-kinase. In terms of processing, constitutively phosphorylated. Phosphorylated on tyrosine residues within the YXXM motifs by BTK and SYK. Isoform 1 and isoform 2 are phosphorylated on tyrosine residues, most likely within the YXXM motifs, via CD19 activation.

The protein localises to the cytoplasm. It localises to the cell membrane. Functionally, signaling adapter that contributes to B-cell development by linking B-cell receptor (BCR) signaling to the phosphoinositide 3-kinase (PI3K)-Akt signaling pathway. Has a complementary role to the BCR coreceptor CD19, coupling BCR and PI3K activation by providing a docking site for the PI3K subunit PIK3R1. Alternatively, links Toll-like receptor (TLR) signaling to PI3K activation, a process preventing excessive inflammatory cytokine production. Also involved in the activation of PI3K in natural killer cells. May be involved in the survival of mature B-cells via activation of REL. This chain is Phosphoinositide 3-kinase adapter protein 1 (PIK3AP1), found in Gallus gallus (Chicken).